The sequence spans 442 residues: Probable alpha-galactosidase B (442 aa).

The first 19 residues, 1–19 (MQRYISLSVSLSLLSGANA), serve as a signal peptide directing secretion. 2 disulfides stabilise this stretch: Cys-42–Cys-74 and Cys-124–Cys-154. Asp-152 acts as the Nucleophile in catalysis. N-linked (GlcNAc...) asparagine glycosylation is found at Asn-159, Asn-173, Asn-179, and Asn-215. 224 to 228 (EWGQA) lines the substrate pocket. The N-linked (GlcNAc...) asparagine glycan is linked to Asn-235. The active-site Proton donor is the Asp-246. The N-linked (GlcNAc...) asparagine glycan is linked to Asn-285.

The protein belongs to the glycosyl hydrolase 27 family.

Its subcellular location is the secreted. It catalyses the reaction Hydrolysis of terminal, non-reducing alpha-D-galactose residues in alpha-D-galactosides, including galactose oligosaccharides, galactomannans and galactolipids.. Functionally, hydrolyzes a variety of simple alpha-D-galactoside as well as more complex molecules such as oligosaccharides and polysaccharides. This Aspergillus oryzae (strain ATCC 42149 / RIB 40) (Yellow koji mold) protein is Probable alpha-galactosidase B (aglB).